A 101-amino-acid chain; its full sequence is Trp operon repressor homolog (101 aa).

Residues Gln-59–Leu-82 mediate DNA binding.

This sequence belongs to the TrpR family. As to quaternary structure, homodimer.

The protein localises to the cytoplasm. Functionally, this protein is an aporepressor. When complexed with L-tryptophan it binds the operator region of the trp operon and prevents the initiation of transcription. The chain is Trp operon repressor homolog from Mannheimia succiniciproducens (strain KCTC 0769BP / MBEL55E).